The sequence spans 146 residues: uncharacterized protein (146 aa).

The chain crosses the membrane as a helical span at residues 6–26 (IPIFVISLSNISHIILAIFFF).

The protein resides in the membrane. This is an uncharacterized protein from Caenorhabditis elegans.